We begin with the raw amino-acid sequence, 508 residues long: Serine carboxypeptidase 3 (508 aa).

A signal peptide spans 1–19; that stretch reads MVTTPRLVSLLLLLALCAA. A propeptide spanning residues 20-80 is cleaved from the precursor; the sequence is AAGALRLPPD…PGQLLERRVT (61 aa). The disordered stretch occupies residues 48-67; it reads PKDSSSSSGRHGARVGEGNE. Leu81 bears the Blocked amino end (Leu) mark. 3 cysteine pairs are disulfide-bonded: Cys133–Cys373, Cys301–Cys316, and Cys339–Cys344. Asn151 is a glycosylation site (N-linked (GlcNAc...) asparagine). The active site involves Ser223. The active site involves Asp411. Cys414 contributes to the substrate binding site. Residue His468 is part of the active site. The propeptide occupies 492-508; sequence EAVPEEESSTTSFYAAM.

The protein belongs to the peptidase S10 family. In terms of assembly, monomer.

It is found in the secreted. The catalysed reaction is Release of a C-terminal amino acid with broad specificity.. With respect to regulation, inhibited by mercuric ions. The protein is Serine carboxypeptidase 3 (CBP3) of Hordeum vulgare (Barley).